The chain runs to 564 residues: Kelch repeat and BTB domain-containing protein 1 (564 aa).

Residues 21-88 (CDIDIVINDE…IYGIPLSLTN (68 aa)) form the BTB domain. Residues 123–219 (CIDFYIYADK…SLLSPQVIKS (97 aa)) form the BACK domain. Kelch repeat units lie at residues 252 to 297 (IELI…VLDN), 298 to 346 (IIYM…ADDE), 347 to 395 (YIYC…MLNG), 397 to 441 (IYVI…VHAG), 442 to 492 (KIYI…SVHN), and 494 to 539 (LYVG…CEPI).

As to quaternary structure, interacts (via BTB domain) with host CUL3.

The protein resides in the host cytoplasm. Probable substrate-specific adapter of CUL3-containing E3 ubiquitin-protein ligases which mediate the ubiquitination and subsequent proteasomal degradation of host target proteins. This Camelus protein is Kelch repeat and BTB domain-containing protein 1 (KBTB1).